A 166-amino-acid polypeptide reads, in one-letter code: Outer membrane protein assembly factor BamE (166 aa).

Residues 1–18 form the signal peptide; that stretch reads MKRTVFPLAVAAALTLTA. C19 is lipidated: N-palmitoyl cysteine. C19 is lipidated: S-diacylglycerol cysteine. Residues 143-166 form a disordered region; sequence LFSNDDSGEMPVKPESKPSDLLNE.

The protein belongs to the BamE family. Part of the Bam complex.

The protein localises to the cell outer membrane. Its function is as follows. Part of the outer membrane protein assembly complex, which is involved in assembly and insertion of beta-barrel proteins into the outer membrane. The chain is Outer membrane protein assembly factor BamE from Methylomonas methanica (strain DSM 25384 / MC09).